Here is a 533-residue protein sequence, read N- to C-terminus: Acetone monooxygenase (methyl acetate-forming) (533 aa).

FAD-binding positions include 43–46 (TWYW), 55–56 (DS), and Tyr-61. Residue 53 to 55 (RFD) coordinates NADP(+). NADP(+) is bound by residues 183 to 189 (NGATGIQ), 206 to 207 (RT), and Trp-492.

The protein belongs to the FAD-binding monooxygenase family. Homotetramer. The cofactor is FAD.

The enzyme catalyses acetone + NADPH + O2 + H(+) = methyl acetate + NADP(+) + H2O. Plays an important role in the metabolism of acetone derived from propane oxidation. Catalyzes the oxidation of acetone to methyl acetate. Exhibits high catalytic efficiency towards various linear and cyclic ketones, such as butanone, 2-pentanone, 2-heptanone, 2-octanone, 2-nonanone, 2-decanone, cyclobutanone, cyclopentanone and cyclohexanone. Elicits the highest catalytic efficiency towards butanone and cyclobutanone. Is highly specific for NADPH and cannot use NADH. The protein is Acetone monooxygenase (methyl acetate-forming) of Gordonia sp. (strain TY-5).